The sequence spans 126 residues: Small ribosomal subunit protein uS13c (126 aa).

Positions 97–126 (PLRGQRTRTNARTRRGGKKTVAGKKKAPRK) are disordered. Residues 101–126 (QRTRTNARTRRGGKKTVAGKKKAPRK) show a composition bias toward basic residues.

The protein belongs to the universal ribosomal protein uS13 family. Part of the 30S ribosomal subunit.

The protein localises to the plastid. It is found in the chloroplast. Its function is as follows. Located at the top of the head of the 30S subunit, it contacts several helices of the 16S rRNA. In Porphyra purpurea (Red seaweed), this protein is Small ribosomal subunit protein uS13c.